A 156-amino-acid polypeptide reads, in one-letter code: uncharacterized protein (156 aa).

In terms of domain architecture, N-acetyltransferase spans 1-145 (MIIRKFSSKD…DAILMIKKKP (145 aa)).

This sequence belongs to the acetyltransferase family.

The protein localises to the cytoplasm. This is an uncharacterized protein from Methanocaldococcus jannaschii (strain ATCC 43067 / DSM 2661 / JAL-1 / JCM 10045 / NBRC 100440) (Methanococcus jannaschii).